Here is a 247-residue protein sequence, read N- to C-terminus: UPF0273 protein PF1931 (247 aa).

One can recognise a KaiC domain in the interval 3–247 (RRVKTGIPGM…VLKRGRIYEL (245 aa)). 30–37 (GGPGTGKS) contributes to the ATP binding site.

The protein belongs to the UPF0273 family.

This Pyrococcus furiosus (strain ATCC 43587 / DSM 3638 / JCM 8422 / Vc1) protein is UPF0273 protein PF1931.